The sequence spans 273 residues: Bis(5'-nucleosyl)-tetraphosphatase, symmetrical (273 aa).

It belongs to the Ap4A hydrolase family.

It catalyses the reaction P(1),P(4)-bis(5'-adenosyl) tetraphosphate + H2O = 2 ADP + 2 H(+). Hydrolyzes diadenosine 5',5'''-P1,P4-tetraphosphate to yield ADP. This Buchnera aphidicola subsp. Schizaphis graminum (strain Sg) protein is Bis(5'-nucleosyl)-tetraphosphatase, symmetrical (apaH).